We begin with the raw amino-acid sequence, 426 residues long: L-ascorbate peroxidase T, chloroplastic (426 aa).

Histidine 112 acts as the Proton acceptor in catalysis. Position 241 (histidine 241) interacts with heme b. A K(+)-binding site is contributed by threonine 242. The tract at residues 245–269 (RARPDRSGWGKPETKYTKTGPGEAG) is disordered. Positions 246–260 (ARPDRSGWGKPETKY) are enriched in basic and acidic residues. 2 residues coordinate K(+): threonine 274 and aspartate 281. Residues 397–417 (YFLNIIIAIGVLVLLSTLFGG) traverse the membrane as a helical segment.

This sequence belongs to the peroxidase family. Ascorbate peroxidase subfamily. Heme b is required as a cofactor.

The protein resides in the plastid. The protein localises to the chloroplast thylakoid membrane. The enzyme catalyses L-ascorbate + H2O2 = L-dehydroascorbate + 2 H2O. Functionally, plays a key role in hydrogen peroxide removal. This chain is L-ascorbate peroxidase T, chloroplastic (APXT), found in Arabidopsis thaliana (Mouse-ear cress).